Reading from the N-terminus, the 482-residue chain is MNEIIGKFAREGILIEDNAYFRLREMDDPASVSSELIVKIKSNGGKFTVLTSEMLDEFFEIDNPAEIKARGPLMVPAERDFDFEVISDTSNRSYTSGEIGDMIAYFNSRYSSLKNLLSKRPELKGHIPIADLRGGEDVVSIIGMVNDVRNTKNNHRIIELEDDTGEISVVVHNENHKLFEKSEKIVRDEVVGVHGTKKGRFVVASEIFHPGVPRIQEKEMDFSVAFISDVHIGSQTFLEDAFMKFVKWINGDFGSEEQRSLAADVKYLVVAGDIVDGIGIYPGQEKELLIRDIHEQYEEAARLFGDIRSDIKIVMIPGNHDSSRIAEPQPAIPEEYAKSLYSIRNIEFLSNPSLVSLDGVRTLIYHGRSFDDMAMSVNGLSHERSDLIMEELLEKRHLAPIYGERTPLASEIEDHLVIDEVPHVLHTGHVHINAYKKYKGVHLINSGTFQSQTEFQKIYNIVPTCGQVPVLNRGVMKLLEFS.

This sequence belongs to the DNA polymerase delta/II small subunit family. Heterodimer of a large subunit and a small subunit.

The catalysed reaction is DNA(n) + a 2'-deoxyribonucleoside 5'-triphosphate = DNA(n+1) + diphosphate. It catalyses the reaction Exonucleolytic cleavage in the 3'- to 5'-direction to yield nucleoside 5'-phosphates.. Possesses two activities: a DNA synthesis (polymerase) and an exonucleolytic activity that degrades single-stranded DNA in the 3' to 5' direction. Has a template-primer preference which is characteristic of a replicative DNA polymerase. This is DNA polymerase II small subunit (polB) from Methanothermobacter thermautotrophicus (strain ATCC 29096 / DSM 1053 / JCM 10044 / NBRC 100330 / Delta H) (Methanobacterium thermoautotrophicum).